Consider the following 95-residue polypeptide: Aspartyl/glutamyl-tRNA(Asn/Gln) amidotransferase subunit C (95 aa).

Belongs to the GatC family. Heterotrimer of A, B and C subunits.

It carries out the reaction L-glutamyl-tRNA(Gln) + L-glutamine + ATP + H2O = L-glutaminyl-tRNA(Gln) + L-glutamate + ADP + phosphate + H(+). It catalyses the reaction L-aspartyl-tRNA(Asn) + L-glutamine + ATP + H2O = L-asparaginyl-tRNA(Asn) + L-glutamate + ADP + phosphate + 2 H(+). In terms of biological role, allows the formation of correctly charged Asn-tRNA(Asn) or Gln-tRNA(Gln) through the transamidation of misacylated Asp-tRNA(Asn) or Glu-tRNA(Gln) in organisms which lack either or both of asparaginyl-tRNA or glutaminyl-tRNA synthetases. The reaction takes place in the presence of glutamine and ATP through an activated phospho-Asp-tRNA(Asn) or phospho-Glu-tRNA(Gln). The sequence is that of Aspartyl/glutamyl-tRNA(Asn/Gln) amidotransferase subunit C from Hydrogenovibrio crunogenus (strain DSM 25203 / XCL-2) (Thiomicrospira crunogena).